The following is a 1463-amino-acid chain: Probable oxidoreductase PXDNL (1463 aa).

Residues 1 to 23 (MEPRLFCWTTLFLLAGWCLPGLP) form the signal peptide. In terms of domain architecture, LRRNT spans 24–50 (CPSRCLCFKSTVRCMHLMLDHIPQVPQ). LRR repeat units follow at residues 51 to 72 (QTTVLDLRFNRIREIPGSAFKK), 75 to 96 (NLNTLLLNNNHIRKISRNAFEG), 99 to 120 (NLLYLYLYKNEIHALDKQTFKG), 123 to 144 (SLEHLYIHFNQLEMLQPETFGD), and 147 to 168 (RLERLFLHNNKLSKIPAGSFSN). One can recognise an LRRCT domain in the interval 180 to 233 (NALVCDCDLMWLGELLQGFAQHGHTQAAATCEYPRRLHGRAVASVTVEEFNCQS). Ig-like C2-type domains follow at residues 234–322 (PRIT…AMLR), 330–414 (PSFV…ANII), 419–504 (PQFT…VQLT), and 507–596 (PKAL…MFLT). Intrachain disulfides connect cysteine 255/cysteine 305, cysteine 351/cysteine 398, cysteine 440/cysteine 488, cysteine 532/cysteine 580, and cysteine 718/cysteine 734. Asparagine 387 is a glycosylation site (N-linked (GlcNAc...) asparagine). The active-site Proton acceptor is the histidine 812. Aspartate 813 serves as a coordination point for Ca(2+). Disulfide bonds link cysteine 832/cysteine 842 and cysteine 836/cysteine 859. 4 residues coordinate Ca(2+): threonine 891, tyrosine 893, aspartate 895, and serine 897. Cysteine 944 and cysteine 953 are joined by a disulfide. Histidine 1057 lines the heme b pocket. 2 cysteine pairs are disulfide-bonded: cysteine 1160-cysteine 1217 and cysteine 1258-cysteine 1284. Residues 1393-1451 (AGCTDVRGVPRKAEERWMKEDCTHCICESGQVTCVVEICPPAPCPSPELVKGTCCPVCR) enclose the VWFC domain.

It belongs to the peroxidase family. XPO subfamily. Interacts with PXDN; this interaction inhibits the peroxidase activity of PXDN. Requires heme b as cofactor. Phosphorylation by SRC on tyrosine residues is required for targeting to polysomes. In terms of tissue distribution, the 57 kDa isoform PMR1 is the only form detected at protein levels in human cell lines. Expressed in heart.

Its subcellular location is the secreted. It is found in the endoplasmic reticulum. The protein resides in the cell membrane. It localises to the cytoplasm. Probable oxidoreductase. Lacks peroxidase activity. Inhibits the peroxidase activity of PXDN through its interaction. Its function is as follows. Endonuclease selectively degrading some target mRNAs while they are engaged by translating ribosomes, among which albumin and beta-globin mRNAs. The protein is Probable oxidoreductase PXDNL of Homo sapiens (Human).